A 341-amino-acid chain; its full sequence is tRNA N6-adenosine threonylcarbamoyltransferase (341 aa).

H111 and H115 together coordinate Fe cation. Substrate-binding positions include 133-137 (AVSGG), D166, G179, D183, and N273. D301 serves as a coordination point for Fe cation.

The protein belongs to the KAE1 / TsaD family. Fe(2+) serves as cofactor.

The protein localises to the cytoplasm. The enzyme catalyses L-threonylcarbamoyladenylate + adenosine(37) in tRNA = N(6)-L-threonylcarbamoyladenosine(37) in tRNA + AMP + H(+). In terms of biological role, required for the formation of a threonylcarbamoyl group on adenosine at position 37 (t(6)A37) in tRNAs that read codons beginning with adenine. Is involved in the transfer of the threonylcarbamoyl moiety of threonylcarbamoyl-AMP (TC-AMP) to the N6 group of A37, together with TsaE and TsaB. TsaD likely plays a direct catalytic role in this reaction. The chain is tRNA N6-adenosine threonylcarbamoyltransferase from Geobacter metallireducens (strain ATCC 53774 / DSM 7210 / GS-15).